A 160-amino-acid chain; its full sequence is Ribonuclease H (160 aa).

The RNase H type-1 domain occupies 5-146 (PGGLVEIWTD…VDQLATAARE (142 aa)). Mg(2+) contacts are provided by Asp-14, Glu-52, Asp-74, and Asp-138.

This sequence belongs to the RNase H family. As to quaternary structure, monomer. Mg(2+) is required as a cofactor.

The protein localises to the cytoplasm. It catalyses the reaction Endonucleolytic cleavage to 5'-phosphomonoester.. Functionally, endonuclease that specifically degrades the RNA of RNA-DNA hybrids. The chain is Ribonuclease H from Acidiphilium cryptum (strain JF-5).